Here is a 358-residue protein sequence, read N- to C-terminus: Phospho-N-acetylmuramoyl-pentapeptide-transferase (358 aa).

The next 10 helical transmembrane spans lie at 21–41 (YLTL…FVVG), 71–91 (TMGG…WADL), 95–115 (YIWV…VDDY), 133–153 (FWQS…ASVA), 166–186 (VAVN…VGSS), 197–217 (GLAV…AYAA), 234–254 (AGEL…FLWF), 261–281 (VFMG…LAVL), 286–306 (LVLF…MLQV), and 337–357 (IVRF…TLKI).

It belongs to the glycosyltransferase 4 family. MraY subfamily. Requires Mg(2+) as cofactor.

It localises to the cell inner membrane. The catalysed reaction is UDP-N-acetyl-alpha-D-muramoyl-L-alanyl-gamma-D-glutamyl-meso-2,6-diaminopimeloyl-D-alanyl-D-alanine + di-trans,octa-cis-undecaprenyl phosphate = di-trans,octa-cis-undecaprenyl diphospho-N-acetyl-alpha-D-muramoyl-L-alanyl-D-glutamyl-meso-2,6-diaminopimeloyl-D-alanyl-D-alanine + UMP. Its pathway is cell wall biogenesis; peptidoglycan biosynthesis. Functionally, catalyzes the initial step of the lipid cycle reactions in the biosynthesis of the cell wall peptidoglycan: transfers peptidoglycan precursor phospho-MurNAc-pentapeptide from UDP-MurNAc-pentapeptide onto the lipid carrier undecaprenyl phosphate, yielding undecaprenyl-pyrophosphoryl-MurNAc-pentapeptide, known as lipid I. In Nitrosococcus oceani (strain ATCC 19707 / BCRC 17464 / JCM 30415 / NCIMB 11848 / C-107), this protein is Phospho-N-acetylmuramoyl-pentapeptide-transferase.